A 487-amino-acid polypeptide reads, in one-letter code: Probable Xaa-Pro aminopeptidase MGYG_06974 (487 aa).

Mn(2+) contacts are provided by Asp255, Asp266, Glu414, and Glu458.

This sequence belongs to the peptidase M24B family. It depends on Mn(2+) as a cofactor.

It catalyses the reaction Release of any N-terminal amino acid, including proline, that is linked to proline, even from a dipeptide or tripeptide.. Its function is as follows. Catalyzes the removal of a penultimate prolyl residue from the N-termini of peptides. The polypeptide is Probable Xaa-Pro aminopeptidase MGYG_06974 (Arthroderma gypseum (strain ATCC MYA-4604 / CBS 118893) (Microsporum gypseum)).